Here is an 806-residue protein sequence, read N- to C-terminus: MPAPAVDSSRFRHRKISVKQRLRIYKSHEIKDLEQEDVSAISSQHQQRELMEIETGVEKNEEKEEHLYKILQSNQLRENKKDLFIPTPDASKTWDEFDRFYQGEFKCPTSYIQFSAQLEDCCGTLYNMDEEDEIFLADLNKSLADSVEPLTEDEFELIMANFESSIKDRQPFLSMDPESILSFADLKPTMLKNDVGDSGVKKELAKEIGMPEDEPFLTMFDNKRPLGKREKNMETLIELFGEKIHDHWKQRKISRHGCDIFPQLKSERNNDKDDNDPYVCFRRRELRQPRKTRRIDVQNSQKLRLLCQQLEYTKDLALTVAKRERAVLEVLENEKFVFQARAQLKTMKRKLGIDADNEDLYSAKKQKLVSSVRTIKQQQQLLLQKQLQIQQQQQQQLQQQQAAITSDSSVKRAKSSKSSKLHKEDSGLYADEKGSEPKKKGPKTGSNKNKEQSLSSAQEIGAQSPVANVSNVQQQQKQASSQVYVKLPNSKIPDIVLEDVGKLLHSKEKSTRKFVEDRMRKRKQEDGDIFFNLTDDPYNPVFNLSIPDNVSPQDAPFSSVAGSKFEVKTSYYSPNLQNYITGTANDIKVFNKEGEAVENNEYKKLEFFNPFDNEIHTHSREFPIAFRRRRGRFNMEYIDQRKTDHNINDMLLQFIDLDGIQKQELDNDVINVYDSKLDDLSRSYYHWKYDSNYNIYGSKFSDEPAKLNQISNDTQVVRFGTMLGSKAYEQLRDATIKYRQEQINKRKKLNSLQQQQMLQKGQQPINNAPHSQSSSPPSHQDTRKNPGSTPNQSSPPKKHVTPNAAA.

Disordered stretches follow at residues 403–461 (AITS…QEIG) and 751–806 (SLQQ…NAAA). Over residues 411–420 (KRAKSSKSSK) the composition is skewed to basic residues. Residues 421–439 (LHKEDSGLYADEKGSEPKK) show a composition bias toward basic and acidic residues. Residues 751-779 (SLQQQQMLQKGQQPINNAPHSQSSSPPSH) are compositionally biased toward low complexity. Over residues 785-795 (NPGSTPNQSSP) the composition is skewed to polar residues.

It belongs to the enhancer of polycomb family. As to quaternary structure, component of the NuA4 histone acetyltransferase complex.

The protein resides in the nucleus. Functionally, component of the NuA4 histone acetyltransferase complex which is involved in transcriptional activation of selected genes principally by acetylation of nucleosomal histone H4 and H2A. The NuA4 complex is also involved in DNA repair. Involved in gene silencing by neighboring heterochromatin, blockage of the silencing spreading along the chromosome, and required for cell cycle progression through G2/M. The protein is Enhancer of polycomb-like protein 1 (EPL1) of Kluyveromyces lactis (strain ATCC 8585 / CBS 2359 / DSM 70799 / NBRC 1267 / NRRL Y-1140 / WM37) (Yeast).